The sequence spans 160 residues: S-ribosylhomocysteine lyase (160 aa).

Residues histidine 57, histidine 61, and cysteine 127 each coordinate Fe cation.

It belongs to the LuxS family. In terms of assembly, homodimer. Fe cation serves as cofactor.

The enzyme catalyses S-(5-deoxy-D-ribos-5-yl)-L-homocysteine = (S)-4,5-dihydroxypentane-2,3-dione + L-homocysteine. Functionally, involved in the synthesis of autoinducer 2 (AI-2) which is secreted by bacteria and is used to communicate both the cell density and the metabolic potential of the environment. The regulation of gene expression in response to changes in cell density is called quorum sensing. Catalyzes the transformation of S-ribosylhomocysteine (RHC) to homocysteine (HC) and 4,5-dihydroxy-2,3-pentadione (DPD). The chain is S-ribosylhomocysteine lyase from Streptococcus suis (strain 98HAH33).